A 430-amino-acid polypeptide reads, in one-letter code: Histidine--tRNA ligase (430 aa).

Belongs to the class-II aminoacyl-tRNA synthetase family.

Its subcellular location is the cytoplasm. It catalyses the reaction tRNA(His) + L-histidine + ATP = L-histidyl-tRNA(His) + AMP + diphosphate + H(+). The sequence is that of Histidine--tRNA ligase from Metallosphaera sedula (strain ATCC 51363 / DSM 5348 / JCM 9185 / NBRC 15509 / TH2).